Reading from the N-terminus, the 209-residue chain is MALNGEYAHVAFDELRAPLNKGKWRSDVFKADAAMPLDVEVGTGNGTYFAHHAKTHSDRLLVGLELKYKPLIQSIRRAVNAGCKNAAITRFHAFNIDHLFAEGEIDNVYIHFPDPWTSPKKPKNRFVCKENLELLFRLQKPGSFINFKTDSLVYFLWAMDEIRQSPYKIIFETQDLHNSDMKDQNFETAFEKIFLREGIKINFVRLQKI.

3 residues coordinate S-adenosyl-L-methionine: Glu-40, Glu-65, and Asp-114. Asp-114 is an active-site residue. Substrate is bound by residues Asp-150 and Thr-188–Glu-191.

This sequence belongs to the class I-like SAM-binding methyltransferase superfamily. TrmB family.

The enzyme catalyses guanosine(46) in tRNA + S-adenosyl-L-methionine = N(7)-methylguanosine(46) in tRNA + S-adenosyl-L-homocysteine. It functions in the pathway tRNA modification; N(7)-methylguanine-tRNA biosynthesis. In terms of biological role, catalyzes the formation of N(7)-methylguanine at position 46 (m7G46) in tRNA. This chain is tRNA (guanine-N(7)-)-methyltransferase, found in Bdellovibrio bacteriovorus (strain ATCC 15356 / DSM 50701 / NCIMB 9529 / HD100).